The following is a 195-amino-acid chain: MTLTHHSTFIKGIEGSAEGEIEDVRQTTVFDPPFYGHPMLVPPSPSLTTMFRTRSTTPDEEGTAIAEIDQQDWDIMVKVPTYEYYGFVMYLVSMLGFGVYIVWALTPAPVLKFFEIHYYLSRWWALAIPTWLFVLVIYIHVVLNAYNTEVLTKPFSSLECIVDQYALVGEEDGAAHGRVVDLRLCDVNKQQLEET.

At 1 to 84 (MTLTHHSTFI…IMVKVPTYEY (84 aa)) the chain is on the cytoplasmic side. The helical transmembrane segment at 85–105 (YGFVMYLVSMLGFGVYIVWAL) threads the bilayer. The Lumenal segment spans residues 106-122 (TPAPVLKFFEIHYYLSR). Residues 123 to 143 (WWALAIPTWLFVLVIYIHVVL) traverse the membrane as a helical segment. Over 144–195 (NAYNTEVLTKPFSSLECIVDQYALVGEEDGAAHGRVVDLRLCDVNKQQLEET) the chain is Cytoplasmic.

The protein localises to the endoplasmic reticulum membrane. Has a role in meiosis. In Schizosaccharomyces pombe (strain 972 / ATCC 24843) (Fission yeast), this protein is Meiotically up-regulated gene 84 protein (mug84).